The primary structure comprises 440 residues: Microtubule-associated tumor suppressor 1 homolog (440 aa).

A coiled-coil region spans residues 106 to 401 (IQHLLSEREE…RLSMENEELL (296 aa)). A phosphoserine mark is found at Ser373, Ser394, Ser415, Ser425, Ser429, Ser431, Ser433, Ser434, and Ser438. A disordered region spans residues 407-440 (GDLCSPKRSPTSSAIPFQSPRNSGSFSSPSISPR). The span at 425 to 440 (SPRNSGSFSSPSISPR) shows a compositional bias: low complexity.

This sequence belongs to the MTUS1 family. In terms of assembly, homodimer. Interacts with AGTR2. Interacts with PTPN6. Present in neurons (at protein level).

The protein resides in the mitochondrion. Its subcellular location is the golgi apparatus. The protein localises to the cell membrane. It localises to the nucleus. In terms of biological role, cooperates with AGTR2 to inhibit ERK2 activation and cell proliferation. May be required for AGTR2 cell surface expression. Together with PTPN6, induces UBE2V2 expression upon angiotensin-II stimulation. The protein is Microtubule-associated tumor suppressor 1 homolog (Mtus1) of Rattus norvegicus (Rat).